A 339-amino-acid chain; its full sequence is Formyl peptide receptor-related sequence 6 (339 aa).

At M1–R23 the chain is on the extracellular side. N-linked (GlcNAc...) asparagine glycosylation is found at N4 and N10. The helical transmembrane segment at V24–N44 threads the bilayer. Topologically, residues G45–I62 are cytoplasmic. Residues C63 to I85 traverse the membrane as a helical segment. Residues V86–K99 lie on the Extracellular side of the membrane. A disulfide bridge links C98 with C178. Residues F100–A120 traverse the membrane as a helical segment. Residues M121–K144 lie on the Cytoplasmic side of the membrane. A helical membrane pass occupies residues V145–T165. Residues T166–S198 are Extracellular-facing. A helical transmembrane segment spans residues L199–I219. At C220–R241 the chain is on the cytoplasmic side. A helical membrane pass occupies residues V242–L262. The Extracellular portion of the chain corresponds to L263–N280. A helical transmembrane segment spans residues T281–G301. Residues Q302–L339 lie on the Cytoplasmic side of the membrane.

Belongs to the G-protein coupled receptor 1 family. In terms of tissue distribution, expressed exclusively in vomeronasal tissue. Expressed in 1.2 % of a subset of sensory neurons located in the apical layer of the vomeronasal organ. Each neuron appears to express only one receptor gene. Expressed in brain, spleen, skeletal muscle and at high level in testis.

The protein localises to the membrane. May have an olfactory function associated with the identification of pathogens or of pathogenic states. This Mus musculus (Mouse) protein is Formyl peptide receptor-related sequence 6 (Fpr-rs6).